Reading from the N-terminus, the 398-residue chain is Cap-specific mRNA (nucleoside-2'-O-)-methyltransferase 1 (398 aa).

Positions Gln85 to Leu298 constitute a RrmJ-type SAM-dependent 2'-O-MTase domain. S-adenosyl-L-methionine contacts are provided by Gly132 and Asp211. The active-site Proton acceptor is the Lys252. A disordered region spans residues Leu371 to Gly398.

It catalyses the reaction a 5'-end (N(7)-methyl 5'-triphosphoguanosine)-ribonucleoside in mRNA + S-adenosyl-L-methionine = a 5'-end (N(7)-methyl 5'-triphosphoguanosine)-(2'-O-methyl-ribonucleoside) in mRNA + S-adenosyl-L-homocysteine + H(+). Functionally, S-adenosyl-L-methionine-dependent methyltransferase that mediates RNA cap1 2'-O-ribose methylation to the 5'-cap structure of RNAs. Methylates the ribose of the first nucleotide of a m(7)GpppG-capped mRNA to produce m(7)GpppNmp (cap1). In Leishmania braziliensis, this protein is Cap-specific mRNA (nucleoside-2'-O-)-methyltransferase 1.